Here is a 476-residue protein sequence, read N- to C-terminus: Glycogen synthase (476 aa).

K15 serves as a coordination point for ADP-alpha-D-glucose.

It belongs to the glycosyltransferase 1 family. Bacterial/plant glycogen synthase subfamily.

The catalysed reaction is [(1-&gt;4)-alpha-D-glucosyl](n) + ADP-alpha-D-glucose = [(1-&gt;4)-alpha-D-glucosyl](n+1) + ADP + H(+). It functions in the pathway glycan biosynthesis; glycogen biosynthesis. Synthesizes alpha-1,4-glucan chains using ADP-glucose. The chain is Glycogen synthase from Leptospira biflexa serovar Patoc (strain Patoc 1 / Ames).